Reading from the N-terminus, the 506-residue chain is Maturase K (506 aa).

The protein belongs to the intron maturase 2 family. MatK subfamily.

The protein localises to the plastid. It is found in the chloroplast. Functionally, usually encoded in the trnK tRNA gene intron. Probably assists in splicing its own and other chloroplast group II introns. This is Maturase K from Trifolium repens (Creeping white clover).